A 298-amino-acid polypeptide reads, in one-letter code: Riboflavin transporter (298 aa).

The next 9 helical transmembrane spans lie at 8–28 (LQGA…NSVA), 35–55 (FGLP…VVIL), 79–99 (VFLA…PVPI), 101–121 (QGIA…GLWL), 125–145 (VGMA…IILE), 151–171 (FNLA…YSLM), 184–204 (MVVY…LPDW), 211–231 (TVWL…WAIA), and 258–278 (WLVF…IIVL). 2 EamA domains span residues 10-144 (GALW…MIIL) and 156-284 (LLPV…AFIT).

Belongs to the drug/metabolite transporter (DMT) superfamily. 10 TMS drug/metabolite exporter (DME) (TC 2.A.7.3) family.

The protein localises to the cell membrane. Functionally, transports riboflavin into the cell. In Vibrio cholerae serotype O1 (strain ATCC 39315 / El Tor Inaba N16961), this protein is Riboflavin transporter.